The chain runs to 172 residues: Cell division protein SepF (172 aa).

The segment at 18-73 is disordered; the sequence is RRYDEEDLPDEELTTEVYSDDGYEPSSEVTQLHHHDSNEQHARGHKAVQHRRRSEL. Positions 22-40 are enriched in acidic residues; it reads EEDLPDEELTTEVYSDDGY. The span at 48-59 shows a compositional bias: basic and acidic residues; that stretch reads QLHHHDSNEQHA. The span at 60-70 shows a compositional bias: basic residues; the sequence is RGHKAVQHRRR.

It belongs to the SepF family. Homodimer. Interacts with FtsZ.

The protein localises to the cytoplasm. Its function is as follows. Cell division protein that is part of the divisome complex and is recruited early to the Z-ring. Probably stimulates Z-ring formation, perhaps through the cross-linking of FtsZ protofilaments. Its function overlaps with FtsA. This is Cell division protein SepF from Cutibacterium acnes (strain DSM 16379 / KPA171202) (Propionibacterium acnes).